We begin with the raw amino-acid sequence, 160 residues long: Protein shisa-like-2B (160 aa).

The chain crosses the membrane as a helical span at residues 65–85 (IGALIGLGIAALVLLAFVISV).

This sequence belongs to the shisa family.

It localises to the membrane. In Homo sapiens (Human), this protein is Protein shisa-like-2B.